The sequence spans 163 residues: Crossover junction endodeoxyribonuclease RuvC (163 aa).

Active-site residues include Asp-7, Glu-66, and Asp-139. Mg(2+) contacts are provided by Asp-7, Glu-66, and Asp-139.

This sequence belongs to the RuvC family. As to quaternary structure, homodimer which binds Holliday junction (HJ) DNA. The HJ becomes 2-fold symmetrical on binding to RuvC with unstacked arms; it has a different conformation from HJ DNA in complex with RuvA. In the full resolvosome a probable DNA-RuvA(4)-RuvB(12)-RuvC(2) complex forms which resolves the HJ. Mg(2+) is required as a cofactor.

It is found in the cytoplasm. The enzyme catalyses Endonucleolytic cleavage at a junction such as a reciprocal single-stranded crossover between two homologous DNA duplexes (Holliday junction).. Functionally, the RuvA-RuvB-RuvC complex processes Holliday junction (HJ) DNA during genetic recombination and DNA repair. Endonuclease that resolves HJ intermediates. Cleaves cruciform DNA by making single-stranded nicks across the HJ at symmetrical positions within the homologous arms, yielding a 5'-phosphate and a 3'-hydroxyl group; requires a central core of homology in the junction. The consensus cleavage sequence is 5'-(A/T)TT(C/G)-3'. Cleavage occurs on the 3'-side of the TT dinucleotide at the point of strand exchange. HJ branch migration catalyzed by RuvA-RuvB allows RuvC to scan DNA until it finds its consensus sequence, where it cleaves and resolves the cruciform DNA. This chain is Crossover junction endodeoxyribonuclease RuvC, found in Thermomicrobium roseum (strain ATCC 27502 / DSM 5159 / P-2).